The following is a 336-amino-acid chain: Acetyl-coenzyme A carboxylase carboxyl transferase subunit alpha (336 aa).

In terms of domain architecture, CoA carboxyltransferase C-terminal spans 48–308 (ALEAKVESLR…KSMLIEELQG (261 aa)).

It belongs to the AccA family. As to quaternary structure, acetyl-CoA carboxylase is a heterohexamer composed of biotin carboxyl carrier protein (AccB), biotin carboxylase (AccC) and two subunits each of ACCase subunit alpha (AccA) and ACCase subunit beta (AccD).

The protein resides in the cytoplasm. It catalyses the reaction N(6)-carboxybiotinyl-L-lysyl-[protein] + acetyl-CoA = N(6)-biotinyl-L-lysyl-[protein] + malonyl-CoA. Its pathway is lipid metabolism; malonyl-CoA biosynthesis; malonyl-CoA from acetyl-CoA: step 1/1. Its function is as follows. Component of the acetyl coenzyme A carboxylase (ACC) complex. First, biotin carboxylase catalyzes the carboxylation of biotin on its carrier protein (BCCP) and then the CO(2) group is transferred by the carboxyltransferase to acetyl-CoA to form malonyl-CoA. This is Acetyl-coenzyme A carboxylase carboxyl transferase subunit alpha from Chlorobaculum parvum (strain DSM 263 / NCIMB 8327) (Chlorobium vibrioforme subsp. thiosulfatophilum).